We begin with the raw amino-acid sequence, 188 residues long: Acireductone dioxygenase (188 aa).

Residues H97, H99, E103, and H141 each coordinate Fe(2+). The Ni(2+) site is built by H97, H99, E103, and H141.

This sequence belongs to the acireductone dioxygenase (ARD) family. Monomer. Fe(2+) serves as cofactor. Ni(2+) is required as a cofactor.

The enzyme catalyses 1,2-dihydroxy-5-(methylsulfanyl)pent-1-en-3-one + O2 = 3-(methylsulfanyl)propanoate + CO + formate + 2 H(+). The catalysed reaction is 1,2-dihydroxy-5-(methylsulfanyl)pent-1-en-3-one + O2 = 4-methylsulfanyl-2-oxobutanoate + formate + 2 H(+). It functions in the pathway amino-acid biosynthesis; L-methionine biosynthesis via salvage pathway; L-methionine from S-methyl-5-thio-alpha-D-ribose 1-phosphate: step 5/6. Functionally, catalyzes 2 different reactions between oxygen and the acireductone 1,2-dihydroxy-3-keto-5-methylthiopentene (DHK-MTPene) depending upon the metal bound in the active site. Fe-containing acireductone dioxygenase (Fe-ARD) produces formate and 2-keto-4-methylthiobutyrate (KMTB), the alpha-ketoacid precursor of methionine in the methionine recycle pathway. Ni-containing acireductone dioxygenase (Ni-ARD) produces methylthiopropionate, carbon monoxide and formate, and does not lie on the methionine recycle pathway. The polypeptide is Acireductone dioxygenase (Xanthomonas oryzae pv. oryzae (strain MAFF 311018)).